Consider the following 270-residue polypeptide: Imidazole glycerol phosphate synthase subunit HisF (270 aa).

Active-site residues include Asp-11 and Asp-130.

This sequence belongs to the HisA/HisF family. As to quaternary structure, heterodimer of HisH and HisF.

It is found in the cytoplasm. The enzyme catalyses 5-[(5-phospho-1-deoxy-D-ribulos-1-ylimino)methylamino]-1-(5-phospho-beta-D-ribosyl)imidazole-4-carboxamide + L-glutamine = D-erythro-1-(imidazol-4-yl)glycerol 3-phosphate + 5-amino-1-(5-phospho-beta-D-ribosyl)imidazole-4-carboxamide + L-glutamate + H(+). The protein operates within amino-acid biosynthesis; L-histidine biosynthesis; L-histidine from 5-phospho-alpha-D-ribose 1-diphosphate: step 5/9. Functionally, IGPS catalyzes the conversion of PRFAR and glutamine to IGP, AICAR and glutamate. The HisF subunit catalyzes the cyclization activity that produces IGP and AICAR from PRFAR using the ammonia provided by the HisH subunit. The chain is Imidazole glycerol phosphate synthase subunit HisF from Chloroflexus aggregans (strain MD-66 / DSM 9485).